Reading from the N-terminus, the 283-residue chain is Large ribosomal subunit protein uL2 (283 aa).

Disordered regions lie at residues alanine 37–glycine 59 and histidine 219–lysine 283. Residues tryptophan 256 to lysine 269 are compositionally biased toward basic residues.

It belongs to the universal ribosomal protein uL2 family. In terms of assembly, part of the 50S ribosomal subunit. Forms a bridge to the 30S subunit in the 70S ribosome.

Functionally, one of the primary rRNA binding proteins. Required for association of the 30S and 50S subunits to form the 70S ribosome, for tRNA binding and peptide bond formation. It has been suggested to have peptidyltransferase activity; this is somewhat controversial. Makes several contacts with the 16S rRNA in the 70S ribosome. The polypeptide is Large ribosomal subunit protein uL2 (Mycoplasmoides gallisepticum (strain R(low / passage 15 / clone 2)) (Mycoplasma gallisepticum)).